The primary structure comprises 417 residues: Tol-Pal system protein TolB (417 aa).

The first 16 residues, methionine 1–alanine 16, serve as a signal peptide directing secretion.

This sequence belongs to the TolB family. The Tol-Pal system is composed of five core proteins: the inner membrane proteins TolA, TolQ and TolR, the periplasmic protein TolB and the outer membrane protein Pal. They form a network linking the inner and outer membranes and the peptidoglycan layer.

The protein resides in the periplasm. Its function is as follows. Part of the Tol-Pal system, which plays a role in outer membrane invagination during cell division and is important for maintaining outer membrane integrity. The protein is Tol-Pal system protein TolB of Helicobacter pylori (strain HPAG1).